Here is a 105-residue protein sequence, read N- to C-terminus: Large ribosomal subunit protein eL42 (105 aa).

The disordered stretch occupies residues 23–52 (KVTQYKKGKESRLAQGRRRYDSKQKGFGGQ). Residues 29–46 (KGKESRLAQGRRRYDSKQ) are compositionally biased toward basic and acidic residues.

Belongs to the eukaryotic ribosomal protein eL42 family.

The chain is Large ribosomal subunit protein eL42 (rpl-44) from Brugia malayi (Filarial nematode worm).